The sequence spans 509 residues: Maturase K (509 aa).

It belongs to the intron maturase 2 family. MatK subfamily.

It is found in the plastid. Its subcellular location is the chloroplast. Usually encoded in the trnK tRNA gene intron. Probably assists in splicing its own and other chloroplast group II introns. The chain is Maturase K from Nicotiana bigelovii (Bigelov's tobacco).